A 292-amino-acid chain; its full sequence is Glutamate racemase (292 aa).

Residues 28–29 (DS) and 60–61 (YG) each bind substrate. Cys-91 functions as the Proton donor/acceptor in the catalytic mechanism. 92 to 93 (NT) serves as a coordination point for substrate. Residue Cys-200 is the Proton donor/acceptor of the active site. 201-202 (TH) provides a ligand contact to substrate.

The protein belongs to the aspartate/glutamate racemases family.

The catalysed reaction is L-glutamate = D-glutamate. Its pathway is cell wall biogenesis; peptidoglycan biosynthesis. Provides the (R)-glutamate required for cell wall biosynthesis. The sequence is that of Glutamate racemase from Trichormus variabilis (strain ATCC 29413 / PCC 7937) (Anabaena variabilis).